The primary structure comprises 145 residues: uncharacterized protein (145 aa).

Belongs to the asfivirus K145R family.

The protein localises to the virion. This is an uncharacterized protein from African swine fever virus (isolate Tick/South Africa/Pretoriuskop Pr4/1996) (ASFV).